The following is a 391-amino-acid chain: Formate-dependent phosphoribosylglycinamide formyltransferase (391 aa).

Residues 20 to 21 (EL) and Glu80 contribute to the N(1)-(5-phospho-beta-D-ribosyl)glycinamide site. Residues Arg112, Lys153, 158–163 (SSGKGQ), 193–196 (EGFI), and Glu201 contribute to the ATP site. The ATP-grasp domain maps to 117–306 (RLAAEELGLT…EFALHVRAFT (190 aa)). Residues Glu265 and Glu277 each coordinate Mg(2+). Residues Asp284, Lys354, and 361-362 (RR) each bind N(1)-(5-phospho-beta-D-ribosyl)glycinamide.

This sequence belongs to the PurK/PurT family. Homodimer.

It catalyses the reaction N(1)-(5-phospho-beta-D-ribosyl)glycinamide + formate + ATP = N(2)-formyl-N(1)-(5-phospho-beta-D-ribosyl)glycinamide + ADP + phosphate + H(+). It functions in the pathway purine metabolism; IMP biosynthesis via de novo pathway; N(2)-formyl-N(1)-(5-phospho-D-ribosyl)glycinamide from N(1)-(5-phospho-D-ribosyl)glycinamide (formate route): step 1/1. In terms of biological role, involved in the de novo purine biosynthesis. Catalyzes the transfer of formate to 5-phospho-ribosyl-glycinamide (GAR), producing 5-phospho-ribosyl-N-formylglycinamide (FGAR). Formate is provided by PurU via hydrolysis of 10-formyl-tetrahydrofolate. This chain is Formate-dependent phosphoribosylglycinamide formyltransferase, found in Vibrio vulnificus (strain CMCP6).